We begin with the raw amino-acid sequence, 414 residues long: Phosphoglycerate kinase (414 aa).

Substrate-binding positions include 19-21, Arg34, 57-60, Arg114, and Arg154; these read DLN and HQSK. ATP-binding positions include Glu332 and 358 to 361; that span reads GGHS.

Belongs to the phosphoglycerate kinase family. As to quaternary structure, monomer.

It localises to the cytoplasm. It catalyses the reaction (2R)-3-phosphoglycerate + ATP = (2R)-3-phospho-glyceroyl phosphate + ADP. The protein operates within carbohydrate degradation; glycolysis; pyruvate from D-glyceraldehyde 3-phosphate: step 2/5. The sequence is that of Phosphoglycerate kinase from Thermococcus onnurineus (strain NA1).